We begin with the raw amino-acid sequence, 305 residues long: Ribosomal RNA small subunit methyltransferase H (305 aa).

S-adenosyl-L-methionine contacts are provided by residues 30 to 32 (GGH), D49, F74, D96, and Q103.

Belongs to the methyltransferase superfamily. RsmH family.

The protein localises to the cytoplasm. It catalyses the reaction cytidine(1402) in 16S rRNA + S-adenosyl-L-methionine = N(4)-methylcytidine(1402) in 16S rRNA + S-adenosyl-L-homocysteine + H(+). Specifically methylates the N4 position of cytidine in position 1402 (C1402) of 16S rRNA. In Francisella tularensis subsp. tularensis (strain FSC 198), this protein is Ribosomal RNA small subunit methyltransferase H.